Consider the following 340-residue polypeptide: Ketol-acid reductoisomerase (NADP(+)) (340 aa).

The KARI N-terminal Rossmann domain occupies 2–182 (AELYYDNQAD…GCTRAGVLRT (181 aa)). NADP(+)-binding positions include 25-28 (FGSQ), serine 51, serine 53, and 83-86 (DIGQ). The active site involves histidine 108. Glycine 134 contributes to the NADP(+) binding site. Positions 183-328 (TFAEETETDL…RELRRMMPFV (146 aa)) constitute a KARI C-terminal knotted domain. The Mg(2+) site is built by aspartate 191, glutamate 195, glutamate 227, and glutamate 231. Position 252 (serine 252) interacts with substrate.

The protein belongs to the ketol-acid reductoisomerase family. It depends on Mg(2+) as a cofactor.

The catalysed reaction is (2R)-2,3-dihydroxy-3-methylbutanoate + NADP(+) = (2S)-2-acetolactate + NADPH + H(+). It catalyses the reaction (2R,3R)-2,3-dihydroxy-3-methylpentanoate + NADP(+) = (S)-2-ethyl-2-hydroxy-3-oxobutanoate + NADPH + H(+). It participates in amino-acid biosynthesis; L-isoleucine biosynthesis; L-isoleucine from 2-oxobutanoate: step 2/4. It functions in the pathway amino-acid biosynthesis; L-valine biosynthesis; L-valine from pyruvate: step 2/4. Involved in the biosynthesis of branched-chain amino acids (BCAA). Catalyzes an alkyl-migration followed by a ketol-acid reduction of (S)-2-acetolactate (S2AL) to yield (R)-2,3-dihydroxy-isovalerate. In the isomerase reaction, S2AL is rearranged via a Mg-dependent methyl migration to produce 3-hydroxy-3-methyl-2-ketobutyrate (HMKB). In the reductase reaction, this 2-ketoacid undergoes a metal-dependent reduction by NADPH to yield (R)-2,3-dihydroxy-isovalerate. The polypeptide is Ketol-acid reductoisomerase (NADP(+)) (Chloroflexus aurantiacus (strain ATCC 29366 / DSM 635 / J-10-fl)).